A 1751-amino-acid chain; its full sequence is Non-reducing polyketide synthase afvB (1751 aa).

The segment at 19-249 (FRRLRLHSKC…PLPVYGGPCH (231 aa)) is N-terminal acylcarrier protein transacylase domain (SAT). A Ketosynthase family 3 (KS3) domain is found at 381-811 (HEKIAVIGMS…GGNTSLLLEE (431 aa)). Catalysis depends on for beta-ketoacyl synthase activity residues cysteine 554, histidine 689, and histidine 730. The tract at residues 910–1228 (FVFSGQGSFS…SMSALHSAGV (319 aa)) is malonyl-CoA:ACP transacylase (MAT) domain. Positions 1291 to 1607 (TALVHHILEE…PRILMSRFFD (317 aa)) are product template (PT) domain. Positions 1295-1429 (HHILEESFGK…GVVTCGDSHS (135 aa)) are N-terminal hotdog fold. Residues 1295-1603 (HHILEESFGK…LRPLPRILMS (309 aa)) enclose the PKS/mFAS DH domain. The Proton acceptor; for dehydratase activity role is filled by histidine 1327. The C-terminal hotdog fold stretch occupies residues 1456-1603 (LASRVSKDLV…LRPLPRILMS (148 aa)). The active-site Proton donor; for dehydratase activity is the aspartate 1514. The segment at 1610–1670 (DSQYGQMAQQ…KAPISGSWPN (61 aa)) is disordered. The segment covering 1612–1657 (QYGQMAQQEPSTALPSTPQHTSSAKTTESTPSQQDESDNTSLATPE) has biased composition (polar residues). Positions 1670 to 1747 (NANSQLVRDA…DLKAYLEGNQ (78 aa)) constitute a Carrier domain. Residue serine 1707 is modified to O-(pantetheine 4'-phosphoryl)serine.

Pantetheine 4'-phosphate is required as a cofactor. Expressed mainly in sclerotia, with expression levels 20-fold and 10-fold greater than the expression levels of this gene found in mycelium and conidia, respectively.

Its pathway is secondary metabolite biosynthesis. Non-reducing polyketide synthase (NRPKS); part of the gene cluster that mediates the biosynthesis of aflavarin, a bicoumarin that exhibits anti-insectan activity against the fungivorous beetle C.hemipterus. Catalyzes the formation of the aromatic polyketide from acetyl coenzyme A and seven malonyl coenzyme A molecules. The polypeptide is Non-reducing polyketide synthase afvB (Aspergillus flavus (strain ATCC 200026 / FGSC A1120 / IAM 13836 / NRRL 3357 / JCM 12722 / SRRC 167)).